Reading from the N-terminus, the 137-residue chain is NADPH-dependent 7-cyano-7-deazaguanine reductase (137 aa).

Cys-50 acts as the Thioimide intermediate in catalysis. The Proton donor role is filled by Asp-57. Substrate is bound by residues 72–74 (VEL) and 91–92 (HE).

This sequence belongs to the GTP cyclohydrolase I family. QueF type 1 subfamily.

The protein resides in the cytoplasm. The enzyme catalyses 7-aminomethyl-7-carbaguanine + 2 NADP(+) = 7-cyano-7-deazaguanine + 2 NADPH + 3 H(+). The protein operates within tRNA modification; tRNA-queuosine biosynthesis. In terms of biological role, catalyzes the NADPH-dependent reduction of 7-cyano-7-deazaguanine (preQ0) to 7-aminomethyl-7-deazaguanine (preQ1). In Synechococcus sp. (strain CC9902), this protein is NADPH-dependent 7-cyano-7-deazaguanine reductase.